The primary structure comprises 309 residues: Taste receptor type 2 member 20 (309 aa).

At 1 to 6 the chain is on the extracellular side; that stretch reads MMSFLH. The helical transmembrane segment at 7 to 27 threads the bilayer; the sequence is IVFSILVVVAFILGNFANGFI. Over 28–46 the chain is Cytoplasmic; that stretch reads ALINFIAWVKRQKISSADQ. A helical transmembrane segment spans residues 47-67; it reads IIAALAVSRVGLLWVILLHWY. Topologically, residues 68-79 are extracellular; it reads STVLNPTSSNLK. The chain crosses the membrane as a helical span at residues 80-100; the sequence is VIIFISNAWAVTNHFSIWLAT. The Cytoplasmic segment spans residues 101–125; that stretch reads SLSIFYLLKIVNFSRLIFHHLKRKA. A helical membrane pass occupies residues 126–146; that stretch reads KSVVLVIVLGSLFFLVCHLVM. Over 147–178 the chain is Extracellular; sequence KHTYINVWTEECEGNVTWKIKLRNAMHLSNLT. Asn161 and Asn176 each carry an N-linked (GlcNAc...) asparagine glycan. A helical transmembrane segment spans residues 179–199; it reads VAMLANLIPFTLTLISFLLLI. At 200–229 the chain is on the cytoplasmic side; the sequence is YSLCKHLKKMQLHGKGSQDPSTKIHIKALQ. A helical membrane pass occupies residues 230–250; it reads TVTSFLILLAIYFLCLIISFW. Over 251–259 the chain is Extracellular; the sequence is NFKMRPKEI. Residues 260–280 form a helical membrane-spanning segment; sequence VLMLCQAFGIIYPSFHSFILI. Residues 281–309 are Cytoplasmic-facing; it reads WGNKTLKQTFLSVLWQVTCWAKGQNQSTP.

The protein belongs to the G-protein coupled receptor T2R family. In terms of tissue distribution, expressed in subsets of taste receptor cells of the tongue and exclusively in gustducin-positive cells.

It is found in the membrane. Functionally, receptor that may play a role in the perception of bitterness and is gustducin-linked. May play a role in sensing the chemical composition of the gastrointestinal content. The activity of this receptor may stimulate alpha gustducin, mediate PLC-beta-2 activation and lead to the gating of TRPM5. The sequence is that of Taste receptor type 2 member 20 (TAS2R20) from Homo sapiens (Human).